The sequence spans 235 residues: tRNA (guanine-N(1)-)-methyltransferase (235 aa).

S-adenosyl-L-methionine is bound by residues glycine 112 and 132–137 (LGDFVL).

The protein belongs to the RNA methyltransferase TrmD family. As to quaternary structure, homodimer.

The protein resides in the cytoplasm. It catalyses the reaction guanosine(37) in tRNA + S-adenosyl-L-methionine = N(1)-methylguanosine(37) in tRNA + S-adenosyl-L-homocysteine + H(+). Specifically methylates guanosine-37 in various tRNAs. This chain is tRNA (guanine-N(1)-)-methyltransferase, found in Acaryochloris marina (strain MBIC 11017).